A 290-amino-acid polypeptide reads, in one-letter code: MDKIIKSIAQSGAFRAYVLDSTETVALAQEKHNTLSSSTVALGRTLIANQILAANQKGDSKITVKVIGDSSFGHIISVADTKGHVKGYIQNTGVDIKKTATGEVLVGPFMGNGHFVTIIDYGTGNPYTSTTPLITGEIGEDFAYYLTESEQTPSAIGLNVLLDENDKVKVAGGFMVQVLPGASEEEIARYEKRLQEMPAISHLLASKNHVDALLEAIYGDEPYKRLSEEPLSFQCDCSRERFEAALMTLPKADLQAMIDEDKGAEIVCQFCGTKYQFNENDLEALINDKA.

2 disulfides stabilise this stretch: cysteine 235/cysteine 237 and cysteine 268/cysteine 271.

This sequence belongs to the HSP33 family. In terms of processing, under oxidizing conditions two disulfide bonds are formed involving the reactive cysteines. Under reducing conditions zinc is bound to the reactive cysteines and the protein is inactive.

It is found in the cytoplasm. In terms of biological role, redox regulated molecular chaperone. Protects both thermally unfolding and oxidatively damaged proteins from irreversible aggregation. Plays an important role in the bacterial defense system toward oxidative stress. The protein is 33 kDa chaperonin of Streptococcus pyogenes serotype M28 (strain MGAS6180).